A 183-amino-acid chain; its full sequence is A-type ATP synthase subunit E (183 aa).

It belongs to the V-ATPase E subunit family. As to quaternary structure, has multiple subunits, A(3), B(3), C, D, E, F, G, I and K(x); there may be a few other subunits as well.

Its subcellular location is the cell membrane. In terms of biological role, component of the A-type ATP synthase that produces ATP from ADP in the presence of a proton gradient across the membrane. The chain is A-type ATP synthase subunit E from Methanosarcina mazei (strain ATCC BAA-159 / DSM 3647 / Goe1 / Go1 / JCM 11833 / OCM 88) (Methanosarcina frisia).